The primary structure comprises 378 residues: Succinyl-diaminopimelate desuccinylase (378 aa).

Residue H67 coordinates Zn(2+). Residue D69 is part of the active site. A Zn(2+)-binding site is contributed by D100. The active-site Proton acceptor is E134. Residues E135, E163, and H349 each coordinate Zn(2+).

Belongs to the peptidase M20A family. DapE subfamily. Homodimer. Zn(2+) is required as a cofactor. It depends on Co(2+) as a cofactor.

The catalysed reaction is N-succinyl-(2S,6S)-2,6-diaminopimelate + H2O = (2S,6S)-2,6-diaminopimelate + succinate. Its pathway is amino-acid biosynthesis; L-lysine biosynthesis via DAP pathway; LL-2,6-diaminopimelate from (S)-tetrahydrodipicolinate (succinylase route): step 3/3. Its function is as follows. Catalyzes the hydrolysis of N-succinyl-L,L-diaminopimelic acid (SDAP), forming succinate and LL-2,6-diaminopimelate (DAP), an intermediate involved in the bacterial biosynthesis of lysine and meso-diaminopimelic acid, an essential component of bacterial cell walls. The polypeptide is Succinyl-diaminopimelate desuccinylase (Nitrosospira multiformis (strain ATCC 25196 / NCIMB 11849 / C 71)).